Consider the following 1017-residue polypeptide: Formin-binding protein 4 (1017 aa).

2 disordered regions span residues 1–141 and 160–202; these read MGKK…STDI and PAAP…TSGW. Phosphoserine is present on Ser18. Positions 40 to 69 are enriched in low complexity; the sequence is DSTAAVPSQPAPSAATTTTTAVTAAAASDD. Residues Ser116 and Ser124 each carry the phosphoserine modification. Polar residues predominate over residues 130-141; sequence SKETNGNQSTDI. A Phosphothreonine modification is found at Thr172. A compositionally biased stretch (low complexity) spans 181-200; the sequence is AATSTLSSSTSNGTDSTQTS. Residues 214-248 form the WW 1 domain; sequence GIEMGDWQEVWDENTGCYYYWNTQTNEVTWELPQY. Lys290 bears the N6-acetyllysine mark. Lys301 is covalently cross-linked (Glycyl lysine isopeptide (Lys-Gly) (interchain with G-Cter in SUMO1)). Residue Lys335 forms a Glycyl lysine isopeptide (Lys-Gly) (interchain with G-Cter in SUMO2) linkage. Lys348 is covalently cross-linked (Glycyl lysine isopeptide (Lys-Gly) (interchain with G-Cter in SUMO1); alternate). Lys348 is covalently cross-linked (Glycyl lysine isopeptide (Lys-Gly) (interchain with G-Cter in SUMO2); alternate). Disordered regions lie at residues 421–519, 621–676, 706–792, and 899–994; these read LEEG…TTPK, ESQW…CKES, PLPL…IKRK, and TATI…AERN. A phosphoserine mark is found at Ser427, Ser432, Ser435, Ser438, and Ser442. The segment covering 428-442 has biased composition (polar residues); sequence VSGSSPRSDISQPAS. Basic residues predominate over residues 449–458; the sequence is LMSKRGKWKM. The segment covering 461 to 474 has biased composition (low complexity); it reads RATSPESTSRSSSK. Position 464 is a phosphoserine (Ser464). Residue Thr479 is modified to Phosphothreonine. The span at 491 to 513 shows a compositional bias: basic and acidic residues; sequence NSEKIDENSDKEMEVEESPEKIK. Residues Ser499 and Ser508 each carry the phosphoserine modification. A phosphothreonine mark is found at Thr516 and Thr517. Lys519 participates in a covalent cross-link: Glycyl lysine isopeptide (Lys-Gly) (interchain with G-Cter in SUMO1); alternate. Lys519 is covalently cross-linked (Glycyl lysine isopeptide (Lys-Gly) (interchain with G-Cter in SUMO2); alternate). In terms of domain architecture, WW 2 spans 595–629; that stretch reads NATPKGWSCHWDRDHRRYFYVNEQSGESQWEFPDG. The segment covering 627 to 637 has biased composition (acidic residues); sequence PDGEEEEEESQ. The span at 640-656 shows a compositional bias: basic and acidic residues; sequence ENRDETLAKQTLKDKTG. Residues 657-671 show a composition bias toward low complexity; it reads TDSNSTESSETSTGS. The span at 706 to 732 shows a compositional bias: pro residues; it reads PLPLEMPPPPPPPPESPPPPPPPPPPA. Residues 733 to 748 show a composition bias toward acidic residues; it reads EDGEIQEVEMEDEGSE. A compositionally biased stretch (low complexity) spans 764–786; the sequence is SAQTTVVTSQSSVDSTISSSSST. Residues 904 to 925 are compositionally biased toward pro residues; sequence EPPPPPPPPPPPPPPAPKMPPP. The segment covering 929–941 has biased composition (basic residues); sequence KKGRKDKAKKSKT. The segment covering 957–970 has biased composition (acidic residues); sequence LDEEDNSSSSEEDR. A phosphoserine mark is found at Ser963, Ser964, and Ser965. Positions 971–982 are enriched in basic and acidic residues; sequence ESTAQKRIEEWK.

As to quaternary structure, binds FMN1. Interacts with the Arg/Gly-rich-flanked Pro-rich of KHDRBS1/SAM68. Arginine methylation in these regions has no effect on this binding. In terms of tissue distribution, highly expressed in the eye.

This Homo sapiens (Human) protein is Formin-binding protein 4 (FNBP4).